The following is a 439-amino-acid chain: UDP-N-acetylmuramate--L-alanine ligase (439 aa).

An ATP-binding site is contributed by 113–119 (GSHGKTS).

It belongs to the MurCDEF family.

It is found in the cytoplasm. The enzyme catalyses UDP-N-acetyl-alpha-D-muramate + L-alanine + ATP = UDP-N-acetyl-alpha-D-muramoyl-L-alanine + ADP + phosphate + H(+). Its pathway is cell wall biogenesis; peptidoglycan biosynthesis. Cell wall formation. In Lactobacillus delbrueckii subsp. bulgaricus (strain ATCC 11842 / DSM 20081 / BCRC 10696 / JCM 1002 / NBRC 13953 / NCIMB 11778 / NCTC 12712 / WDCM 00102 / Lb 14), this protein is UDP-N-acetylmuramate--L-alanine ligase.